The chain runs to 206 residues: Urease accessory protein UreG (206 aa).

13–20 lines the GTP pocket; it reads GPVGSGKT.

The protein belongs to the SIMIBI class G3E GTPase family. UreG subfamily. As to quaternary structure, homodimer. UreD, UreF and UreG form a complex that acts as a GTP-hydrolysis-dependent molecular chaperone, activating the urease apoprotein by helping to assemble the nickel containing metallocenter of UreC. The UreE protein probably delivers the nickel.

Its subcellular location is the cytoplasm. In terms of biological role, facilitates the functional incorporation of the urease nickel metallocenter. This process requires GTP hydrolysis, probably effectuated by UreG. This Natronomonas pharaonis (strain ATCC 35678 / DSM 2160 / CIP 103997 / JCM 8858 / NBRC 14720 / NCIMB 2260 / Gabara) (Halobacterium pharaonis) protein is Urease accessory protein UreG.